The chain runs to 340 residues: NAD-dependent epimerase/dehydratase terH (340 aa).

Residues 7 to 27 (IVPPGGLVLVTGVTGFIGSYI) form a helical membrane-spanning segment. Residue N139 is glycosylated (N-linked (GlcNAc...) asparagine). Position 176 (Y176) interacts with NADP(+).

Belongs to the NAD(P)-dependent epimerase/dehydratase family. Dihydroflavonol-4-reductase subfamily.

It localises to the membrane. NAD-dependent epimerase/dehydratase; part of the gene cluster that mediates the biosynthesis of terrein, a fungal metabolite with ecological, antimicrobial, antiproliferative, and antioxidative activities. The first step in the pathway is performed by the polyketide synthase terA that produces 4-hydroxy-6-methylpyranon (4-HMP), orsellinic acid (OA), and 2,3-dehydro-6-hydroxymellein (2,3-dehydro-6-HM) by condensing acetyl-CoA with two, three, or four malonyl-CoA units, respectively. 4-HMP and OA are not pathway intermediates, but are rather shunt or side products. 2,3-dehydro-6-HM is further converted to 6-hydroxymellein (6-HM) by the 6-hydroxymellein synthase terB. The monooxygenases terC and terD, the multicopper oxidase terE and the Kelch-like protein terF are then involved in the transformation of 6-HM to terrein. Even if they are co-regulated with the other terrein cluster genes, terH and terI seem to be dispensable for terrein production; whereas one or both of the 2 transporters terG and terJ are probably required for efficient secretion of metabolites. In Aspergillus terreus (strain NIH 2624 / FGSC A1156), this protein is NAD-dependent epimerase/dehydratase terH.